We begin with the raw amino-acid sequence, 95 residues long: UPF0358 protein BcerKBAB4_3775 (95 aa).

The protein belongs to the UPF0358 family.

The sequence is that of UPF0358 protein BcerKBAB4_3775 from Bacillus mycoides (strain KBAB4) (Bacillus weihenstephanensis).